A 92-amino-acid polypeptide reads, in one-letter code: Putative septation protein SpoVG (92 aa).

This sequence belongs to the SpoVG family.

In terms of biological role, could be involved in septation. This is Putative septation protein SpoVG from Thermoanaerobacter pseudethanolicus (strain ATCC 33223 / 39E) (Clostridium thermohydrosulfuricum).